The sequence spans 456 residues: GTPase Der (456 aa).

EngA-type G domains follow at residues 4–169 (PIVA…PSKE) and 178–353 (IQLA…EQHR). GTP is bound by residues 10–17 (GRPNVGKS), 57–61 (DTGGL), 120–123 (NKCE), 184–191 (GRPNVGKS), 231–235 (DTAGI), and 296–299 (NKWD). The KH-like domain maps to 354–439 (RRVSTSVVNE…PLKLFWRGKQ (86 aa)).

Belongs to the TRAFAC class TrmE-Era-EngA-EngB-Septin-like GTPase superfamily. EngA (Der) GTPase family. In terms of assembly, associates with the 50S ribosomal subunit.

GTPase that plays an essential role in the late steps of ribosome biogenesis. This is GTPase Der from Prochlorococcus marinus (strain MIT 9211).